We begin with the raw amino-acid sequence, 741 residues long: Fibrinogen alpha chain (741 aa).

A signal peptide spans 1-18 (MIPVTILCVLLCLNLAWA). Residue Q19 is modified to Pyrrolidone carboxylic acid. Residues 67-506 (CCRMQGIIDD…STRRSYNGKD (440 aa)) are a coiled coil. The tract at residues 270–307 (VAEARGDSSPSHTGKLITSSHRRESPSLVDKTSSASSV) is disordered. Residues 277-288 (SSPSHTGKLITS) show a composition bias toward polar residues. C310 and C341 form a disulfide bridge. Composition is skewed to low complexity over residues 381–398 (STSSRHSIGSSTSSHVTG) and 435–449 (SASHSKTVLTSSSSS). The disordered stretch occupies residues 381-510 (STSSRHSIGS…SYNGKDCDDI (130 aa)). The segment covering 450 to 459 (FNKGGSTFET) has biased composition (polar residues). The region spanning 498-739 (TRRSYNGKDC…VVRMKIRPLE (242 aa)) is the Fibrinogen C-terminal domain. Positions 666, 668, 670, and 672 each coordinate Ca(2+). C674 and C687 are joined by a disulfide.

In terms of assembly, heterohexamer; disulfide linked. Contains 2 sets of 3 non-identical chains (alpha, beta and gamma). The 2 heterotrimers are in head to head conformation with the N-termini in a small central domain. Conversion of fibrinogen to fibrin is triggered by thrombin, which cleaves fibrinopeptides A and B from alpha and beta chains, and thus exposes the N-terminal polymerization sites responsible for the formation of the soft clot. The soft clot is converted into the hard clot by factor XIIIA which catalyzes the epsilon-(gamma-glutamyl)lysine cross-linking between gamma chains (stronger) and between alpha chains (weaker) of different monomers. Post-translationally, forms F13A-mediated cross-links between a glutamine and the epsilon-amino group of a lysine residue, forming fibronectin-fibrinogen heteropolymers.

The protein localises to the secreted. Cleaved by the protease thrombin to yield monomers which, together with fibrinogen beta (FGB) and fibrinogen gamma (FGG), polymerize to form an insoluble fibrin matrix. Fibrin has a major function in hemostasis as one of the primary components of blood clots. In Gallus gallus (Chicken), this protein is Fibrinogen alpha chain (FGA).